The chain runs to 676 residues: Envelope glycoprotein (676 aa).

The N-terminal stretch at 1–32 is a signal peptide; that stretch reads MGVTGILQLPRDRFKRTSFFLWVIILFQRTFS. The Extracellular portion of the chain corresponds to 33–650; sequence IPLGVIHNST…NDNWWTGWRQ (618 aa). Residue Asn40 is glycosylated (N-linked (GlcNAc...) asparagine; by host). Cystine bridges form between Cys53-Cys609, Cys108-Cys135, Cys121-Cys147, Cys511-Cys556, and Cys601-Cys608. A receptor-binding region spans residues 54-201; that stretch reads RDKLSSTNQL…DFFSSHPLRE (148 aa). 11 N-linked (GlcNAc...) asparagine; by host glycosylation sites follow: Asn204, Asn228, Asn238, Asn257, Asn268, Asn296, Asn317, Asn333, Asn346, Asn386, and Asn413. The tract at residues 305–485 is mucin-like region; sequence ELSFTAVSNR…SGKLGLITNT (181 aa). Polar residues predominate over residues 314 to 335; that stretch reads RAKNISGQSPARTSSDPGTNTT. Residues 314–337 are disordered; sequence RAKNISGQSPARTSSDPGTNTTTE. The tract at residues 370 to 478 is disordered; sequence TISTSPQPPT…TGEESASSGK (109 aa). A compositionally biased stretch (low complexity) spans 414 to 427; sequence DSTASDTPPATTAA. Asn436, Asn454, and Asn462 each carry an N-linked (GlcNAc...) asparagine; by host glycan. Positions 447–464 are enriched in polar residues; it reads ATTTSPQNHSETAGNNNT. A fusion peptide region spans residues 524-539; that stretch reads GAAIGLAWIPYFGPAA. Residues 554-595 adopt a coiled-coil conformation; sequence LICGLRQLANETTQALQLFLRATTELRTFSILNRKAIDFLLQ. A glycan (N-linked (GlcNAc...) asparagine; by host) is linked at Asn563. Positions 615 to 634 form a coiled coil; sequence WTKNITDKIDQIIHDFVDKT. A glycan (N-linked (GlcNAc...) asparagine; by host) is linked at Asn618. A helical membrane pass occupies residues 651-671; that stretch reads WIPAGIGVTGVIIAVIALFCI. S-palmitoyl cysteine; by host attachment occurs at residues Cys670 and Cys672. Residues 672–676 are Cytoplasmic-facing; that stretch reads CKFVF.

It belongs to the filoviruses glycoprotein family. Homotrimer; each monomer consists of a GP1 and a GP2 subunit linked by disulfide bonds. The resulting peplomers (GP1,2) protrude from the virus surface as spikes. Interacts with host integrin alpha-V/ITGAV. Interacts with host CLEC10A. Binds also to host CD209 and CLEC4M/DC-SIGN(R). Interacts with host FOLR1. Interacts with BST2; this interaction inhibits the antiviral effect of BST2 and this allows viral release from infected cells. Interacts with host FCN1; this interaction enhances viral entry. Interacts with host TLR4; this interaction induces cell death in T-lymphocytes or proinflammatory cytokines and SOCS1 production in monocytes. In terms of assembly, interacts with host entry receptor NPC1. As to quaternary structure, GP1 and GP2delta are part of GP1,2delta soluble complexes released by ectodomain shedding. Post-translationally, the signal peptide region modulates GP's high mannose glycosylation, thereby determining the efficiency of the interactions with DC-SIGN(R). In terms of processing, N-glycosylated. O-glycosylated in the mucin-like region. Post-translationally, palmitoylation of GP2 is not required for its function. In terms of processing, specific enzymatic cleavages in vivo yield mature proteins. The precursor is processed into GP1 and GP2 by host cell furin in the trans Golgi, and maybe by other host proteases, to yield the mature GP1 and GP2 proteins. The cleavage site corresponds to the furin optimal cleavage sequence [KR]-X-[KR]-R. This cleavage does not seem to be required for function. After the internalization of the virus into cell endosomes, GP1 C-terminus is removed by the endosomal proteases cathepsin B, cathepsin L, or both, leaving a 19-kDa N-terminal fragment which is further digested by cathepsin B. Proteolytic processing of GP1,2 by host ADAM17 can remove the transmembrane anchor of GP2 and leads to shedding of complexes consisting in GP1 and truncated GP2 (GP1,2delta).

The protein resides in the virion membrane. It is found in the host cell membrane. It localises to the secreted. Functionally, trimeric GP1,2 complexes form the virion surface spikes and mediate the viral entry processes, with GP1 acting as the receptor-binding subunit and GP2 as the membrane fusion subunit. At later times of infection, down-regulates the expression of various host cell surface molecules that are essential for immune surveillance and cell adhesion. Down-modulates several integrins including ITGA1, ITGA2, ITGA3, ITGA4, ITGA5, ITGA6, ITGAV and ITGB1. This decrease in cell adhesion molecules may lead to cell detachment, contributing to the disruption of blood vessel integrity and hemorrhages developed during infection (cytotoxicity). Interacts with host TLR4 and thereby stimulates the differentiation and activation of monocytes leading to bystander death of T-lymphocytes. Down-regulates as well the function of host natural killer cells. Counteracts the antiviral effect of host BST2/tetherin that restricts release of progeny virions from infected cells. However, cooperates with VP40 and host BST2 to activate canonical NF-kappa-B pathway in a manner dependent on neddylation. In terms of biological role, functions as a decoy for anti-GP1,2 antibodies thereby contributing to viral immune evasion. Interacts and activates host macrophages and dendritic cells inducing up-regulation of cytokine transcription. This effect is mediated throught activation of host TLR4. Its function is as follows. Responsible for binding to the receptor(s) on target cells. Interacts with CD209/DC-SIGN and CLEC4M/DC-SIGNR which act as cofactors for virus entry into dendritic cells (DCs) and endothelial cells. Binding to the macrophage specific lectin CLEC10A also seems to enhance virus infectivity. Interaction with FOLR1/folate receptor alpha may be a cofactor for virus entry in some cell types, although results are contradictory. Members of the Tyro3 receptor tyrosine kinase family also seem to be cell entry factors in filovirus infection. Once attached, the virions are internalized through clathrin-dependent endocytosis and/or macropinocytosis. After internalization of the virus into the endosomes of the host cell, proteolysis of GP1 by two cysteine proteases, CTSB/cathepsin B and CTSL/cathepsin L removes the glycan cap and allows GP1 binding to the host entry receptor NPC1. NPC1-binding, Ca(2+) and acidic pH induce a conformational change of GP2, which unmasks its fusion peptide and permit membranes fusion. Acts as a class I viral fusion protein. Under the current model, the protein has at least 3 conformational states: pre-fusion native state, pre-hairpin intermediate state, and post-fusion hairpin state. During viral and target cell membrane fusion, the coiled coil regions (heptad repeats) assume a trimer-of-hairpins structure, positioning the fusion peptide in close proximity to the C-terminal region of the ectodomain. The formation of this structure appears to drive apposition and subsequent fusion of viral and target cell membranes. Responsible for penetration of the virus into the cell cytoplasm by mediating the fusion of the membrane of the endocytosed virus particle with the endosomal membrane. Low pH in endosomes induces an irreversible conformational change in GP2, releasing the fusion hydrophobic peptide. The chain is Envelope glycoprotein (GP) from Zaire ebolavirus (strain Kikwit-95) (ZEBOV).